A 257-amino-acid chain; its full sequence is Phosphonates import ATP-binding protein PhnC 1 (257 aa).

The ABC transporter domain maps to Leu-2–Pro-246. Gly-35–Ser-42 serves as a coordination point for ATP.

Belongs to the ABC transporter superfamily. Phosphonates importer (TC 3.A.1.9.1) family. As to quaternary structure, the complex is composed of two ATP-binding proteins (PhnC), two transmembrane proteins (PhnE) and a solute-binding protein (PhnD).

The protein localises to the cell inner membrane. The catalysed reaction is phosphonate(out) + ATP + H2O = phosphonate(in) + ADP + phosphate + H(+). Part of the ABC transporter complex PhnCDE involved in phosphonates import. Responsible for energy coupling to the transport system. The polypeptide is Phosphonates import ATP-binding protein PhnC 1 (Ruegeria sp. (strain TM1040) (Silicibacter sp.)).